Reading from the N-terminus, the 257-residue chain is Imidazole glycerol phosphate synthase subunit HisF (257 aa).

Catalysis depends on residues D11 and D130.

This sequence belongs to the HisA/HisF family. As to quaternary structure, heterodimer of HisH and HisF.

The protein resides in the cytoplasm. It carries out the reaction 5-[(5-phospho-1-deoxy-D-ribulos-1-ylimino)methylamino]-1-(5-phospho-beta-D-ribosyl)imidazole-4-carboxamide + L-glutamine = D-erythro-1-(imidazol-4-yl)glycerol 3-phosphate + 5-amino-1-(5-phospho-beta-D-ribosyl)imidazole-4-carboxamide + L-glutamate + H(+). Its pathway is amino-acid biosynthesis; L-histidine biosynthesis; L-histidine from 5-phospho-alpha-D-ribose 1-diphosphate: step 5/9. Functionally, IGPS catalyzes the conversion of PRFAR and glutamine to IGP, AICAR and glutamate. The HisF subunit catalyzes the cyclization activity that produces IGP and AICAR from PRFAR using the ammonia provided by the HisH subunit. In Aliivibrio fischeri (strain MJ11) (Vibrio fischeri), this protein is Imidazole glycerol phosphate synthase subunit HisF.